Here is a 1436-residue protein sequence, read N- to C-terminus: Inositol hexakisphosphate and diphosphoinositol-pentakisphosphate kinase 1 (1436 aa).

64 to 65 (KK) contributes to the substrate binding site. ATP is bound by residues Arg-145, Lys-198, His-205, Arg-224, 248-251 (EEFM), and 257-259 (DVK). 224–225 (RK) lines the substrate pocket. 2 residues coordinate substrate: Lys-259 and Arg-273. ATP-binding positions include Ser-275, Asp-320, and 332–334 (DVN). 337–340 (SFVK) is a binding site for substrate. Residues 382-453 (PTTSGTMMEL…VLDITRLLLA (72 aa)) are polyphosphoinositide-binding domain. Residues 915–998 (GSAPAGCGFR…TSSSRPGGYR (84 aa)) are disordered. A phosphoserine mark is found at Ser-939, Ser-982, Ser-1032, Ser-1068, Ser-1140, and Ser-1147. Disordered regions lie at residues 1131-1191 (NHQA…GFSD) and 1389-1436 (SELS…EAIS). Residues 1163-1181 (SSGPSSTVSSAGPSSPTTV) show a composition bias toward low complexity. A compositionally biased stretch (acidic residues) spans 1405–1436 (LSEETELQAQEVSEEIDQESEVVDELPPEAIS).

Belongs to the histidine acid phosphatase family. VIP1 subfamily.

The protein resides in the cytoplasm. The protein localises to the cytosol. It is found in the cell membrane. The enzyme catalyses 1D-myo-inositol hexakisphosphate + ATP = 1-diphospho-1D-myo-inositol 2,3,4,5,6-pentakisphosphate + ADP. It carries out the reaction 5-diphospho-1D-myo-inositol 1,2,3,4,6-pentakisphosphate + ATP + H(+) = 1,5-bis(diphospho)-1D-myo-inositol 2,3,4,6-tetrakisphosphate + ADP. Its function is as follows. Bifunctional inositol kinase that acts in concert with the IP6K kinases IP6K1, IP6K2 and IP6K3 to synthesize the diphosphate group-containing inositol pyrophosphates diphosphoinositol pentakisphosphate, PP-InsP5, and bis-diphosphoinositol tetrakisphosphate, (PP)2-InsP4. PP-InsP5 and (PP)2-InsP4, also respectively called InsP7 and InsP8, regulate a variety of cellular processes, including apoptosis, vesicle trafficking, cytoskeletal dynamics, exocytosis, insulin signaling and neutrophil activation. Phosphorylates inositol hexakisphosphate (InsP6) at position 1 to produce PP-InsP5 which is in turn phosphorylated by IP6Ks to produce (PP)2-InsP4. Alternatively, phosphorylates PP-InsP5 at position 1, produced by IP6Ks from InsP6, to produce (PP)2-InsP4. Activated when cells are exposed to hyperosmotic stress. The sequence is that of Inositol hexakisphosphate and diphosphoinositol-pentakisphosphate kinase 1 from Mus musculus (Mouse).